Here is a 204-residue protein sequence, read N- to C-terminus: Uridylate kinase (204 aa).

Residue 26-31 (GAGKGT) participates in ATP binding. Residues 46-76 (SAGDLLRAEQGRAGSQYGELIKNCIKEGQIV) form an NMP region. A ribonucleoside 5'-phosphate-binding positions include Arg-52, 74 to 76 (QIV), 104 to 107 (GFPR), and Gln-111. The tract at residues 141-151 (ERGKTSGRSDD) is LID. Arg-142 serves as a coordination point for ATP. A ribonucleoside 5'-phosphate-binding residues include Arg-148 and Arg-159. Position 187 (Arg-187) interacts with ATP.

The protein belongs to the adenylate kinase family. UMP-CMP kinase subfamily. In terms of assembly, monomer. The cofactor is Mg(2+).

The protein localises to the cytoplasm. It localises to the nucleus. It catalyses the reaction UMP + ATP = UDP + ADP. Its function is as follows. Catalyzes the phosphorylation of pyrimidine nucleoside monophosphates at the expense of ATP. Plays an important role in de novo pyrimidine nucleotide biosynthesis. Has preference for UMP and dUMP as phosphate acceptors, but can also use CMP, dCMP, AMP, GMP, dGMP and dTMP. ATP and dATP are the best phosphate donors, but can also use GTP, dGTP, dCTP, and dTTP to some degree. The polypeptide is Uridylate kinase (Saccharomyces cerevisiae (strain ATCC 204508 / S288c) (Baker's yeast)).